Reading from the N-terminus, the 178-residue chain is Bifunctional protein PyrR (178 aa).

Residues 99–111 (IILVDDVLFTGRT) carry the PRPP-binding motif.

The protein belongs to the purine/pyrimidine phosphoribosyltransferase family. PyrR subfamily. Homodimer and homohexamer; in equilibrium.

It carries out the reaction UMP + diphosphate = 5-phospho-alpha-D-ribose 1-diphosphate + uracil. In terms of biological role, regulates transcriptional attenuation of the pyrimidine nucleotide (pyr) operon by binding in a uridine-dependent manner to specific sites on pyr mRNA. This disrupts an antiterminator hairpin in the RNA and favors formation of a downstream transcription terminator, leading to a reduced expression of downstream genes. Its function is as follows. Also displays a weak uracil phosphoribosyltransferase activity which is not physiologically significant. This chain is Bifunctional protein PyrR, found in Clostridium novyi (strain NT).